Consider the following 51-residue polypeptide: MTLFESLRSISSFSNEKNQKLNSKTNISSTTFSINSFENNNICFNGGVCPR.

This is an uncharacterized protein from Dictyostelium discoideum (Social amoeba).